Reading from the N-terminus, the 308-residue chain is Maspardin (308 aa).

Residues 87-159 (FCDGFRKLLD…NSFWLMPAFM (73 aa)) enclose the AB hydrolase-1 domain.

Belongs to the AB hydrolase superfamily. In terms of assembly, interacts with CD4. Interacts with ALDH16A1.

The protein resides in the cytoplasm. Functionally, may play a role as a negative regulatory factor in CD4-dependent T-cell activation. In Macaca fascicularis (Crab-eating macaque), this protein is Maspardin (SPG21).